The following is a 36-amino-acid chain: Alpha-conotoxin-like Pu1.3 (36 aa).

Residues 1 to 21 (SDGRNAGADRKGFGLISQMFK) constitute a propeptide that is removed on maturation. 2 cysteine pairs are disulfide-bonded: Cys24/Cys30 and Cys25/Cys36.

It belongs to the conotoxin A superfamily. In terms of tissue distribution, expressed by the venom duct.

It localises to the secreted. Alpha-conotoxins act on postsynaptic membranes, they bind to the nicotinic acetylcholine receptors (nAChR) and thus inhibit them. The polypeptide is Alpha-conotoxin-like Pu1.3 (Conus pulicarius (Flea-bitten cone)).